The sequence spans 342 residues: 4-hydroxy-2-oxovalerate aldolase (342 aa).

Residues isoleucine 8–glutamine 260 enclose the Pyruvate carboxyltransferase domain. Arginine 16–aspartate 17 lines the substrate pocket. A Mn(2+)-binding site is contributed by aspartate 17. Catalysis depends on histidine 20, which acts as the Proton acceptor. Substrate-binding residues include serine 170 and histidine 199. Positions 199 and 201 each coordinate Mn(2+). Tyrosine 290 is a binding site for substrate.

The protein belongs to the 4-hydroxy-2-oxovalerate aldolase family.

The catalysed reaction is (S)-4-hydroxy-2-oxopentanoate = acetaldehyde + pyruvate. The sequence is that of 4-hydroxy-2-oxovalerate aldolase from Albidiferax ferrireducens (strain ATCC BAA-621 / DSM 15236 / T118) (Rhodoferax ferrireducens).